Consider the following 262-residue polypeptide: tRNA pseudouridine synthase A (262 aa).

The Nucleophile role is filled by aspartate 51. Tyrosine 109 is a substrate binding site.

The protein belongs to the tRNA pseudouridine synthase TruA family. In terms of assembly, homodimer.

It catalyses the reaction uridine(38/39/40) in tRNA = pseudouridine(38/39/40) in tRNA. Functionally, formation of pseudouridine at positions 38, 39 and 40 in the anticodon stem and loop of transfer RNAs. This chain is tRNA pseudouridine synthase A, found in Actinobacillus pleuropneumoniae serotype 7 (strain AP76).